The chain runs to 418 residues: Thyroxine-binding globulin (418 aa).

The N-terminal stretch at 1–20 (MSVFFYLFVLVFGLQATIHC) is a signal peptide. N-linked (GlcNAc...) asparagine glycosylation is found at Asn-24, Asn-39, Asn-102, Asn-168, Asn-227, and Asn-256. 2 residues coordinate thyroxine: Asn-296 and Lys-401.

It belongs to the serpin family.

It localises to the secreted. Functionally, major thyroid hormone transport protein in serum. In Mus musculus (Mouse), this protein is Thyroxine-binding globulin (Serpina7).